A 99-amino-acid chain; its full sequence is MDHKAYMYVLECRDGSYYIGYTTDMRRRLAIHNSGKGAKYTRARLPVKLIYAQGFASKEEAMSAEALLKRKKRPQKEEFLSENQDRNLLSYFEESWGVL.

The region spanning 3 to 78 (HKAYMYVLEC…KRKKRPQKEE (76 aa)) is the GIY-YIG domain.

The protein belongs to the UPF0213 family.

This is UPF0213 protein SP_1535 from Streptococcus pneumoniae serotype 4 (strain ATCC BAA-334 / TIGR4).